Consider the following 241-residue polypeptide: MELKATPRKSQEKLAPGMIPAVAYNKEKNVTFAIERKAFDRAFRQQGTTGLFDIVIEGGETFPALVKAVQMDKRRREAIHADFYMVTYGEPVEVSVPVHTTGKSQGEIQGGLVDVVVHSLNVIAPGPRRIPQEITVDVTNLNIGDHVTAGQIKLPEGVKLAVEPDLVVLSVLPPRLSAEELEAQAQAAQVAGMVASGELSEAAAEAVLEGSASLDAVKAGEEGSRAQQETEEASERADQGQ.

The disordered stretch occupies residues 214-241 (LDAVKAGEEGSRAQQETEEASERADQGQ).

Belongs to the bacterial ribosomal protein bL25 family. CTC subfamily. In terms of assembly, part of the 50S ribosomal subunit; part of the 5S rRNA/L5/L18/L25 subcomplex. Contacts the 5S rRNA. Binds to the 5S rRNA independently of L5 and L18.

In terms of biological role, this is one of the proteins that binds to the 5S RNA in the ribosome where it forms part of the central protuberance. In Deinococcus geothermalis (strain DSM 11300 / CIP 105573 / AG-3a), this protein is Large ribosomal subunit protein bL25.